Consider the following 264-residue polypeptide: Ubiquinone biosynthesis protein COQ4 homolog, mitochondrial (264 aa).

The transit peptide at 1–26 (MMQRCWQISLPLARRRLIPSLTSKRT) directs the protein to the mitochondrion. Positions 169, 170, 173, and 185 each coordinate Zn(2+).

It belongs to the COQ4 family. As to quaternary structure, component of a multi-subunit COQ enzyme complex. Requires Zn(2+) as cofactor.

The protein resides in the mitochondrion inner membrane. The enzyme catalyses a 4-hydroxy-3-methoxy-5-(all-trans-polyprenyl)benzoate + H(+) = a 2-methoxy-6-(all-trans-polyprenyl)phenol + CO2. The protein operates within cofactor biosynthesis; ubiquinone biosynthesis. Its function is as follows. Lyase that catalyzes the C1-decarboxylation of 4-hydroxy-3-methoxy-5-(all-trans-polyprenyl)benzoic acid into 2-methoxy-6-(all-trans-polyprenyl)phenol during ubiquinone biosynthesis. This is Ubiquinone biosynthesis protein COQ4 homolog, mitochondrial from Drosophila grimshawi (Hawaiian fruit fly).